Here is a 417-residue protein sequence, read N- to C-terminus: FAD-dependent monooxygenase aptC (417 aa).

Positions 1-18 (MTLPVLIIGAGLSGLTTA) are cleaved as a signal peptide. The FAD site is built by Glu32, Ala43, Arg117, Asp332, and Gly345.

Belongs to the paxM FAD-dependent monooxygenase family. FAD is required as a cofactor.

It catalyses the reaction 3,6,8,9-tetrahydroxy-1-oxo-3-(2-oxopropyl)-1,2,3,4-tetrahydroanthracene-2-carboxyl-[ACP] + NADPH + O2 + H(+) = 2,3,6,8,9-pentahydroxy-1-oxo-3-(2-oxopropyl)-1,2,3,4-tetrahydroanthracene-2-carboxyl-[ACP] + NADP(+) + H2O. It participates in secondary metabolite biosynthesis. Functionally, FAD-dependent monooxygenase; part of the gene cluster that mediates the biosynthesis of asperthecin, an anthraquinone pigment. Polyketide synthase (PKS) aptA catalyzes the formation of the aromatic polyketide from acetyl coenzyme A and seven malonyl coenzyme A molecules. Polyketide is subsequently hydrolyzed by the action of the hydrolase aptB into endocrocin-9-anthrone. Endocrocin-9-anthrone is then oxidized into endocrocin by the monooxygenase aptC. Endocrocin is likely to decarboxylate spontaneously to form emodin which explains why there is no decarboxylase in the asperthecin biosynthesis cluster. Finally, aptC or another endogenous oxygenase catalyzes additional oxidation steps to form asperthecin. This is FAD-dependent monooxygenase aptC from Emericella nidulans (strain FGSC A4 / ATCC 38163 / CBS 112.46 / NRRL 194 / M139) (Aspergillus nidulans).